Here is a 576-residue protein sequence, read N- to C-terminus: Arginine--tRNA ligase (576 aa).

Positions 121–131 (PNLAKEMHVGH) match the 'HIGH' region motif.

It belongs to the class-I aminoacyl-tRNA synthetase family. In terms of assembly, monomer.

It localises to the cytoplasm. It catalyses the reaction tRNA(Arg) + L-arginine + ATP = L-arginyl-tRNA(Arg) + AMP + diphosphate. The chain is Arginine--tRNA ligase from Alteromonas mediterranea (strain DSM 17117 / CIP 110805 / LMG 28347 / Deep ecotype).